Here is a 599-residue protein sequence, read N- to C-terminus: Elongation factor 4 (599 aa).

Positions Lys-2 to Glu-184 constitute a tr-type G domain. GTP-binding positions include Asp-14–Thr-19 and Asn-131–Asp-134.

Belongs to the TRAFAC class translation factor GTPase superfamily. Classic translation factor GTPase family. LepA subfamily.

Its subcellular location is the cell inner membrane. It carries out the reaction GTP + H2O = GDP + phosphate + H(+). Required for accurate and efficient protein synthesis under certain stress conditions. May act as a fidelity factor of the translation reaction, by catalyzing a one-codon backward translocation of tRNAs on improperly translocated ribosomes. Back-translocation proceeds from a post-translocation (POST) complex to a pre-translocation (PRE) complex, thus giving elongation factor G a second chance to translocate the tRNAs correctly. Binds to ribosomes in a GTP-dependent manner. In Escherichia coli (strain UTI89 / UPEC), this protein is Elongation factor 4.